We begin with the raw amino-acid sequence, 332 residues long: Palmitoyltransferase ZDHHC15B (332 aa).

The Cytoplasmic segment spans residues 1–14 (MALSRALRCCQRIF). Residues 15–35 (SWIPVIIISSVVLWSYYAYVF) traverse the membrane as a helical segment. The Lumenal segment spans residues 36-50 (ELCFVTLSNNLERVT). A helical membrane pass occupies residues 51 to 71 (YLLIFHVCFIMFCWTYWKAIF). Over 72–166 (TPPSTPTKKF…NNCVGFSNYK (95 aa)) the chain is Cytoplasmic. Residues 123 to 173 (RFCDRCQVIKPDRCHHCSVCETCVLKMDHHCPWVNNCVGFSNYKFFLLFLS) form the DHHC domain. Residues C125 and C128 each coordinate Zn(2+). A substrate-binding site is contributed by K132. The Zn(2+) site is built by H138, C139, C142, C145, and H152. Catalysis depends on C153, which acts as the S-palmitoyl cysteine intermediate. C159 is a Zn(2+) binding site. A helical membrane pass occupies residues 167-187 (FFLLFLSYSMIYCVFIASTVF). Topologically, residues 188–204 (QYFLKFWVGDLPNGPAK) are lumenal. A helical transmembrane segment spans residues 205–228 (FHVLFLLFVALMFFVSLMFLFGYH). Residues 229 to 332 (CWLVAKNRST…GSSLLIRTES (104 aa)) are Cytoplasmic-facing. Residues 305–332 (EEKWVEDGGSDEESADENGSSLLIRTES) are disordered.

The protein belongs to the DHHC palmitoyltransferase family. Autopalmitoylated (in vitro).

It localises to the golgi apparatus membrane. The protein resides in the postsynaptic density. It catalyses the reaction L-cysteinyl-[protein] + hexadecanoyl-CoA = S-hexadecanoyl-L-cysteinyl-[protein] + CoA. It carries out the reaction L-cysteinyl-[protein] + tetradecanoyl-CoA = S-tetradecanoyl-L-cysteinyl-[protein] + CoA. The enzyme catalyses L-cysteinyl-[protein] + octadecanoyl-CoA = S-octadecanoyl-L-cysteinyl-[protein] + CoA. In terms of biological role, palmitoyltransferase that catalyzes the addition of palmitate onto various protein substrates. Has no stringent fatty acid selectivity and in addition to palmitate can also transfer onto target proteins myristate from tetradecanoyl-CoA and stearate from octadecanoyl-CoA. May thereby regulate target proteins association and localization to membranes. In the nervous system, probably catalyzes the palmitoylation of synaptic proteins and is involved in the differentiation of dopaminergic neurons and the development of the diencephalon. This Danio rerio (Zebrafish) protein is Palmitoyltransferase ZDHHC15B (zdhhc15b).